A 423-amino-acid chain; its full sequence is NDP-N-acetyl-D-galactosaminuronic acid dehydrogenase (423 aa).

11–28 (TISVVGLGYIGLPTATVL) lines the NAD(+) pocket. Lys-218 functions as the Proton donor/acceptor in the catalytic mechanism. Cys-272 serves as the catalytic Nucleophile.

This sequence belongs to the UDP-glucose/GDP-mannose dehydrogenase family.

Probably involved in the synthesis of sugar components of EPS I, by converting NDP-N-acetyl-D-galactosamine into NDP-N-acetyl-D-galactosaminuronic acid. The polypeptide is NDP-N-acetyl-D-galactosaminuronic acid dehydrogenase (epsD) (Ralstonia nicotianae (strain ATCC BAA-1114 / GMI1000) (Ralstonia solanacearum)).